The following is a 429-amino-acid chain: Serine hydroxymethyltransferase (429 aa).

(6S)-5,6,7,8-tetrahydrofolate contacts are provided by residues Leu133 and 137–139; that span reads GHL. N6-(pyridoxal phosphate)lysine is present on Lys243. Glu259 is a binding site for (6S)-5,6,7,8-tetrahydrofolate.

The protein belongs to the SHMT family. In terms of assembly, homodimer. Pyridoxal 5'-phosphate serves as cofactor.

Its subcellular location is the cytoplasm. The catalysed reaction is (6R)-5,10-methylene-5,6,7,8-tetrahydrofolate + glycine + H2O = (6S)-5,6,7,8-tetrahydrofolate + L-serine. Its pathway is one-carbon metabolism; tetrahydrofolate interconversion. It participates in amino-acid biosynthesis; glycine biosynthesis; glycine from L-serine: step 1/1. Functionally, catalyzes the reversible interconversion of serine and glycine with tetrahydrofolate (THF) serving as the one-carbon carrier. This reaction serves as the major source of one-carbon groups required for the biosynthesis of purines, thymidylate, methionine, and other important biomolecules. Also exhibits THF-independent aldolase activity toward beta-hydroxyamino acids, producing glycine and aldehydes, via a retro-aldol mechanism. This Aster yellows witches'-broom phytoplasma (strain AYWB) protein is Serine hydroxymethyltransferase.